A 221-amino-acid chain; its full sequence is Cytidylate kinase (221 aa).

Residue 11 to 19 (GPCGAGKST) participates in ATP binding.

This sequence belongs to the cytidylate kinase family. Type 1 subfamily.

The protein localises to the cytoplasm. The catalysed reaction is CMP + ATP = CDP + ADP. The enzyme catalyses dCMP + ATP = dCDP + ADP. This Mycoplasmopsis agalactiae (strain NCTC 10123 / CIP 59.7 / PG2) (Mycoplasma agalactiae) protein is Cytidylate kinase.